A 1097-amino-acid chain; its full sequence is Mitochondrial distribution and morphology protein 34 (1097 aa).

One can recognise an SMP-LTD domain in the interval 1–198; it reads MSFNFKWPTF…LPGIIHRLSQ (198 aa). Disordered stretches follow at residues 204–305, 317–343, 390–427, 480–520, 556–600, 645–675, 716–817, and 923–1097; these read EAKS…PLHS, AAFP…SGFS, QSDD…LDAV, DDQP…TSSL, PEVD…SSRT, LDAE…RDLS, GQNA…SPGV, and GSSA…AIRE. Residues 205-229 are compositionally biased toward basic and acidic residues; sequence AKSEKDKVKQKAEAEEPPARSREPT. Residues 252-263 show a composition bias toward basic residues; it reads RKSHSKAKKHSR. Residues 274–283 are compositionally biased toward low complexity; that stretch reads SPCQSPQRPR. The span at 284–293 shows a compositional bias: basic residues; that stretch reads QSPRRPRHVA. Positions 406-416 are enriched in basic and acidic residues; it reads SSSHDGKHDEG. Low complexity-rich tracts occupy residues 508-519 and 572-586; these read SSRSDRSACTSS and GGTP…RFGS. Over residues 662-675 the composition is skewed to polar residues; that stretch reads TNPTSRESSYRDLS. Positions 759-779 are enriched in low complexity; sequence GMSATPARTRASAAASARSRP. Over residues 784-796 the composition is skewed to polar residues; the sequence is YATSPPGDSSGWQ. Residues 923-943 are compositionally biased toward low complexity; that stretch reads GSSAASGTGTTSGSSQTGANA. Polar residues predominate over residues 1004-1024; the sequence is SNKPNNTSTGQGEDSQDNSAA. Residues 1045 to 1059 are compositionally biased toward low complexity; sequence ASGSSASSAITDSSS.

This sequence belongs to the MDM34 family. In terms of assembly, component of the ER-mitochondria encounter structure (ERMES) or MDM complex, composed of MMM1, MDM10, MDM12 and MDM34.

Its subcellular location is the mitochondrion outer membrane. In terms of biological role, component of the ERMES/MDM complex, which serves as a molecular tether to connect the endoplasmic reticulum (ER) and mitochondria. Components of this complex are involved in the control of mitochondrial shape and protein biogenesis, and function in nonvesicular lipid trafficking between the ER and mitochondria. MDM34 is required for the interaction of the ER-resident membrane protein MMM1 and the outer mitochondrial membrane-resident beta-barrel protein MDM10. The polypeptide is Mitochondrial distribution and morphology protein 34 (Mycosarcoma maydis (Corn smut fungus)).